We begin with the raw amino-acid sequence, 287 residues long: 4-hydroxybenzoate octaprenyltransferase (287 aa).

The next 7 helical transmembrane spans lie at 30–50 (ALWI…FALG), 92–112 (IAIA…LNGL), 133–153 (FFAI…PMAF), 158–178 (DTVP…SVAY), 207–227 (VLAI…LGAA), 232–252 (WPYW…YTLI), and 266–286 (HNNW…ALAV).

The protein belongs to the UbiA prenyltransferase family. Mg(2+) serves as cofactor.

The protein resides in the cell inner membrane. The enzyme catalyses all-trans-octaprenyl diphosphate + 4-hydroxybenzoate = 4-hydroxy-3-(all-trans-octaprenyl)benzoate + diphosphate. It functions in the pathway cofactor biosynthesis; ubiquinone biosynthesis. Its function is as follows. Catalyzes the prenylation of para-hydroxybenzoate (PHB) with an all-trans polyprenyl group. Mediates the second step in the final reaction sequence of ubiquinone-8 (UQ-8) biosynthesis, which is the condensation of the polyisoprenoid side chain with PHB, generating the first membrane-bound Q intermediate 3-octaprenyl-4-hydroxybenzoate. The protein is 4-hydroxybenzoate octaprenyltransferase of Burkholderia mallei (strain NCTC 10247).